A 244-amino-acid polypeptide reads, in one-letter code: NAD(P)H-quinone oxidoreductase subunit K (244 aa).

Residues Cys60, Cys61, Cys125, and Cys156 each coordinate [4Fe-4S] cluster. Residues Lys213–Lys244 are disordered. Over residues Glu231–Lys244 the composition is skewed to polar residues.

It belongs to the complex I 20 kDa subunit family. In terms of assembly, NDH-1 can be composed of about 15 different subunits; different subcomplexes with different compositions have been identified which probably have different functions. It depends on [4Fe-4S] cluster as a cofactor.

It localises to the cellular thylakoid membrane. It carries out the reaction a plastoquinone + NADH + (n+1) H(+)(in) = a plastoquinol + NAD(+) + n H(+)(out). The enzyme catalyses a plastoquinone + NADPH + (n+1) H(+)(in) = a plastoquinol + NADP(+) + n H(+)(out). Its function is as follows. NDH-1 shuttles electrons from an unknown electron donor, via FMN and iron-sulfur (Fe-S) centers, to quinones in the respiratory and/or the photosynthetic chain. The immediate electron acceptor for the enzyme in this species is believed to be plastoquinone. Couples the redox reaction to proton translocation, and thus conserves the redox energy in a proton gradient. Cyanobacterial NDH-1 also plays a role in inorganic carbon-concentration. This is NAD(P)H-quinone oxidoreductase subunit K from Prochlorococcus marinus subsp. pastoris (strain CCMP1986 / NIES-2087 / MED4).